Consider the following 391-residue polypeptide: Pectin acetylesterase 7 (391 aa).

Residues 1-23 (MGRLKQCWSSLLVLAVLVIGTGA) form the signal peptide. Residues Ser-171, Asp-267, and His-334 each act as charge relay system in the active site.

Belongs to the pectinacetylesterase family.

Its subcellular location is the secreted. It is found in the cell wall. Hydrolyzes acetyl esters in homogalacturonan regions of pectin. In type I primary cell wall, galacturonic acid residues of pectin can be acetylated at the O-2 and O-3 positions. Decreasing the degree of acetylation of pectin gels in vitro alters their physical properties. The sequence is that of Pectin acetylesterase 7 from Arabidopsis thaliana (Mouse-ear cress).